A 164-amino-acid polypeptide reads, in one-letter code: Cold-inducible RNA-binding protein (164 aa).

Positions Gly-6–Lys-84 constitute an RRM domain. The tract at residues Ala-65–Gly-164 is disordered. The span at Tyr-93 to Gly-118 shows a compositional bias: gly residues. Residues Ser-155–Gly-164 are compositionally biased toward basic and acidic residues.

Interacts with prmt1. Interacts with elavl1/elrA (via RRM3). Associates with ribosomes. Post-translationally, methylated on arginine residues within RGG motifs. Methylation by prmt1 promotes cytoplasmic accumulation.

The protein localises to the nucleus. The protein resides in the nucleoplasm. Its subcellular location is the cytoplasm. In terms of biological role, cold-inducible mRNA binding protein. Acts cooperatively with elavl1/elrA to stabilize AU-rich element (ARE)-containing mRNAs by binding to them and inhibiting their deadenylation. Essential for embryonic gastrulation and neural development, acting to maintain the expression of a set of adhesion molecules, and cell movement during embryogenesis. Required for pronephros development. May play a role in hibernation. In Aquarana catesbeiana (American bullfrog), this protein is Cold-inducible RNA-binding protein.